Reading from the N-terminus, the 132-residue chain is Small ribosomal subunit protein uS8c (132 aa).

It belongs to the universal ribosomal protein uS8 family. In terms of assembly, part of the 30S ribosomal subunit.

The protein resides in the plastid. It is found in the chloroplast. Its function is as follows. One of the primary rRNA binding proteins, it binds directly to 16S rRNA central domain where it helps coordinate assembly of the platform of the 30S subunit. The sequence is that of Small ribosomal subunit protein uS8c (rps8) from Dioscorea elephantipes (Elephant's foot yam).